Here is an 853-residue protein sequence, read N- to C-terminus: Wolframin (853 aa).

The segment at 139-179 (KQLERKMRRIYNLQRKRRRRDDDRSSSSSEGEQEPECEPLE) is disordered. The segment covering 144-157 (KMRRIYNLQRKRRR) has biased composition (basic residues). Residues 169 to 179 (GEQEPECEPLE) show a composition bias toward acidic residues. 10 helical membrane passes run 238 to 258 (MIFH…NLIV), 259 to 279 (SIPN…ISWW), 285 to 305 (LPLV…CKML), 347 to 367 (LYFF…TDAW), 373 to 393 (LTII…YASS), 446 to 466 (FCLN…IMMA), 473 to 493 (GVYT…VCIA), 513 to 533 (IVLF…FVAI), 545 to 565 (WGST…LALN), and 572 to 592 (ITML…LPYM). N694 and N769 each carry an N-linked (GlcNAc...) asparagine glycan.

As to expression, detected in adult brain.

The protein resides in the membrane. It is found in the endoplasmic reticulum. The protein localises to the mitochondrion. In terms of biological role, participates in the regulation of cellular Ca(2+) homeostasis, at least partly, by modulating the filling state of the endoplasmic reticulum Ca(2+) store. In neurons and glial cells, has a role in maintaining neuronal function and integrity during aging. The protein is Wolframin of Drosophila melanogaster (Fruit fly).